A 112-amino-acid chain; its full sequence is MAIKRSSKATSSQAASIKQIVKRCSSLRKMKNVNGCYYNQEDDLPQDVPKGHFPVYVGPNRSRYIVPISWLHHSEFQTLLRLAEEEFGFDHDMGLTIPCDEVFFRSLISMFR.

It belongs to the ARG7 family. Confined to the veins and petioles of rosette leaves and cauline leaves, and specifically expressed at the abaxial side of inflorescence branche; relocates to both the adaxial (Ad) and abaxial (Ab) sides of the branch in reduced red:far-red (R:FR) light, during shade. Also present in flowers.

Its subcellular location is the cell membrane. Functionally, provide a mechanistic link between auxin and plasma membrane H(+)-ATPases (PM H(+)-ATPases, e.g. AHA1 and AHA2), and triggers PM H(+)-ATPases activity by promoting phosphorylation of their C-terminal autoinhibitory domain as a result of PP2C-D subfamily of type 2C phosphatases inhibition, thus leading to the acidification of the apoplast and the facilitation of solutes and water uptake to drive cell expansion. Triggers plant growth probably by promoting cell elongation. Regulates branch angles and bending. In Arabidopsis thaliana (Mouse-ear cress), this protein is Protein SMALL AUXIN UP-REGULATED RNA 10.